The chain runs to 362 residues: Glutaminase-asparaginase (362 aa).

The signal sequence occupies residues 1 to 25; the sequence is MKSALKTFVPGALALLLLFPVAAQA. The Asparaginase/glutaminase domain occupies 35 to 362; sequence ANVVILATGG…KELQRMFWEY (328 aa). Catalysis depends on threonine 45, which acts as the Acyl-ester intermediate. Residues serine 92 and 125 to 126 each bind substrate; that span reads TD.

Belongs to the asparaginase 1 family. As to quaternary structure, homotetramer.

Its subcellular location is the periplasm. It carries out the reaction L-glutamine + H2O = L-glutamate + NH4(+). The catalysed reaction is L-asparagine + H2O = L-aspartate + NH4(+). The protein is Glutaminase-asparaginase of Pseudomonas fluorescens biotype A.